A 113-amino-acid polypeptide reads, in one-letter code: Retrotransposon Gag-like protein 8B (113 aa).

Belongs to the FAM127 family.

This is Retrotransposon Gag-like protein 8B (RTL8B) from Homo sapiens (Human).